Reading from the N-terminus, the 588-residue chain is Arginine--tRNA ligase (588 aa).

Positions 126-136 (PNIAKEMHVGH) match the 'HIGH' region motif.

It belongs to the class-I aminoacyl-tRNA synthetase family. As to quaternary structure, monomer.

It localises to the cytoplasm. It catalyses the reaction tRNA(Arg) + L-arginine + ATP = L-arginyl-tRNA(Arg) + AMP + diphosphate. The protein is Arginine--tRNA ligase of Nostoc sp. (strain PCC 7120 / SAG 25.82 / UTEX 2576).